Here is a 254-residue protein sequence, read N- to C-terminus: Imidazole glycerol phosphate synthase subunit HisF (254 aa).

Residues aspartate 11 and aspartate 130 contribute to the active site.

The protein belongs to the HisA/HisF family. As to quaternary structure, heterodimer of HisH and HisF.

It localises to the cytoplasm. It catalyses the reaction 5-[(5-phospho-1-deoxy-D-ribulos-1-ylimino)methylamino]-1-(5-phospho-beta-D-ribosyl)imidazole-4-carboxamide + L-glutamine = D-erythro-1-(imidazol-4-yl)glycerol 3-phosphate + 5-amino-1-(5-phospho-beta-D-ribosyl)imidazole-4-carboxamide + L-glutamate + H(+). It functions in the pathway amino-acid biosynthesis; L-histidine biosynthesis; L-histidine from 5-phospho-alpha-D-ribose 1-diphosphate: step 5/9. Its function is as follows. IGPS catalyzes the conversion of PRFAR and glutamine to IGP, AICAR and glutamate. The HisF subunit catalyzes the cyclization activity that produces IGP and AICAR from PRFAR using the ammonia provided by the HisH subunit. This Oceanobacillus iheyensis (strain DSM 14371 / CIP 107618 / JCM 11309 / KCTC 3954 / HTE831) protein is Imidazole glycerol phosphate synthase subunit HisF.